The chain runs to 78 residues: Acyl carrier protein BQ2027_MB0103 (78 aa).

A Carrier domain is found at 1–78 (MRDRILAAVC…ELEAVCTEFG (78 aa)). O-(pantetheine 4'-phosphoryl)serine is present on serine 35.

This sequence belongs to the acyl carrier protein (ACP) family. The cofactor is pantetheine 4'-phosphate.

The protein operates within lipid metabolism; fatty acid metabolism. Functionally, acyl-carrier protein (ACP) involved in the biosynthesis of a unique class of isonitrile lipopeptides (INLPs) that seem to play a role in metal acquisition. Is the dedicated ACP for the loading of activated acyl groups catalyzed by FadD10. This Mycobacterium bovis (strain ATCC BAA-935 / AF2122/97) protein is Acyl carrier protein BQ2027_MB0103.